The sequence spans 342 residues: Phosphatidate cytidylyltransferase, mitochondrial (342 aa).

This sequence belongs to the TAM41 family. The cofactor is Mg(2+). Co(2+) is required as a cofactor. Cu(2+) serves as cofactor.

The protein resides in the mitochondrion inner membrane. It catalyses the reaction a 1,2-diacyl-sn-glycero-3-phosphate + CTP + H(+) = a CDP-1,2-diacyl-sn-glycerol + diphosphate. Its pathway is phospholipid metabolism; CDP-diacylglycerol biosynthesis; CDP-diacylglycerol from sn-glycerol 3-phosphate: step 3/3. Catalyzes the formation of CDP-diacylglycerol (CDP-DAG) from phosphatidic acid (PA) in the mitochondrial inner membrane. Required for the biosynthesis of the dimeric phospholipid cardiolipin, which stabilizes supercomplexes of the mitochondrial respiratory chain in the mitochondrial inner membrane. This Drosophila melanogaster (Fruit fly) protein is Phosphatidate cytidylyltransferase, mitochondrial.